The following is a 437-amino-acid chain: Enolase (437 aa).

Gln-162 contacts (2R)-2-phosphoglycerate. Residue Glu-204 is the Proton donor of the active site. Residues Asp-251, Glu-297, and Asp-324 each coordinate Mg(2+). (2R)-2-phosphoglycerate is bound by residues Lys-349, Arg-378, Ser-379, and Lys-400. Lys-349 functions as the Proton acceptor in the catalytic mechanism.

Belongs to the enolase family. Mg(2+) serves as cofactor.

Its subcellular location is the cytoplasm. The protein resides in the secreted. It is found in the cell surface. The enzyme catalyses (2R)-2-phosphoglycerate = phosphoenolpyruvate + H2O. It participates in carbohydrate degradation; glycolysis; pyruvate from D-glyceraldehyde 3-phosphate: step 4/5. In terms of biological role, catalyzes the reversible conversion of 2-phosphoglycerate (2-PG) into phosphoenolpyruvate (PEP). It is essential for the degradation of carbohydrates via glycolysis. The sequence is that of Enolase from Chlorobium chlorochromatii (strain CaD3).